A 479-amino-acid polypeptide reads, in one-letter code: UDP-N-acetylmuramate--L-alanine ligase (479 aa).

Gly128–Thr134 is an ATP binding site.

Belongs to the MurCDEF family.

It localises to the cytoplasm. The enzyme catalyses UDP-N-acetyl-alpha-D-muramate + L-alanine + ATP = UDP-N-acetyl-alpha-D-muramoyl-L-alanine + ADP + phosphate + H(+). The protein operates within cell wall biogenesis; peptidoglycan biosynthesis. Its function is as follows. Cell wall formation. This Psychrobacter arcticus (strain DSM 17307 / VKM B-2377 / 273-4) protein is UDP-N-acetylmuramate--L-alanine ligase.